We begin with the raw amino-acid sequence, 312 residues long: tRNA (adenine(58)-N(1))-methyltransferase catalytic subunit trmt61a (312 aa).

S-adenosyl-L-methionine contacts are provided by residues Leu85, 112–114, Glu133, Arg138, 161–162, and Asp183; these read SGS and DA.

This sequence belongs to the class I-like SAM-binding methyltransferase superfamily. TRM61 family. In terms of assembly, heterotetramer; composed of two copies of trmt6 and two copies of trmt61a.

The protein localises to the nucleus. The enzyme catalyses adenosine(58) in tRNA + S-adenosyl-L-methionine = N(1)-methyladenosine(58) in tRNA + S-adenosyl-L-homocysteine + H(+). Inhibited by calcium and magnesium ions and spermidine. Enhanced by KCl, NaCl and NH(4)Cl in concentrations from 0.1-0.25 M. Concentrations of more than 0.3 M are inhibitory. Functionally, catalytic subunit of tRNA (adenine-N(1)-)-methyltransferase, which catalyzes the formation of N(1)-methyladenine at position 58 (m1A58) in initiator methionyl-tRNA. This chain is tRNA (adenine(58)-N(1))-methyltransferase catalytic subunit trmt61a (trmt61a), found in Dictyostelium discoideum (Social amoeba).